Here is a 587-residue protein sequence, read N- to C-terminus: Tyrosine-protein kinase transforming protein Src (587 aa).

The segment at 1–58 (MGSSKSKPKDPSQRRRSLEPPDSTHHGGFPASQTPNKTAAPDTHRTPSRSFGTVATEP) is disordered. The N-myristoyl glycine; by host moiety is linked to residue glycine 2. Over residues 7 to 25 (KPKDPSQRRRSLEPPDSTH) the composition is skewed to basic and acidic residues. One can recognise an SH3 domain in the interval 81–142 (GGVTTFVALY…PSNYVAPSDS (62 aa)). Positions 148-245 (WYFGKITRRE…GLCHRLTNVC (98 aa)) constitute an SH2 domain. The Protein kinase domain occupies 267-520 (LRLEVKLGQG…YLQAFLEDYF (254 aa)). ATP-binding positions include 273–281 (LGQGCFGEV) and lysine 295. Aspartate 386 serves as the catalytic Proton acceptor. Tyrosine 416 carries the post-translational modification Phosphotyrosine; by autocatalysis.

Belongs to the protein kinase superfamily. Tyr protein kinase family. SRC subfamily. Post-translationally, the phosphorylated form is termed pp60v-src.

It catalyses the reaction L-tyrosyl-[protein] + ATP = O-phospho-L-tyrosyl-[protein] + ADP + H(+). Its function is as follows. This phosphoprotein, required for both the initiation and the maintenance of neoplastic transformation, is a protein kinase that catalyzes the phosphorylation of tyrosine residues in vitro. The chain is Tyrosine-protein kinase transforming protein Src (V-SRC) from Galliformes.